The following is a 93-amino-acid chain: MSAPDVRLTAWVHGWVQGVGFRWWTRCRALELGLTGYAANHADGRVLVVAQGPRAACQKLLQLLQGDTTPGRVAKVVADWSQSTEQITGFSER.

Positions Arg7 to Arg93 constitute an Acylphosphatase-like domain. Residues Arg22 and Asn40 contribute to the active site.

It belongs to the acylphosphatase family.

It carries out the reaction an acyl phosphate + H2O = a carboxylate + phosphate + H(+). This is Acylphosphatase (acyP) from Mycobacterium tuberculosis (strain ATCC 25177 / H37Ra).